Consider the following 149-residue polypeptide: Nucleoside diphosphate kinase 1 (149 aa).

Residues lysine 9, phenylalanine 57, arginine 85, threonine 91, arginine 102, and asparagine 112 each coordinate ATP. The active-site Pros-phosphohistidine intermediate is the histidine 115.

Homohexamer. Mg(2+) serves as cofactor.

It carries out the reaction a 2'-deoxyribonucleoside 5'-diphosphate + ATP = a 2'-deoxyribonucleoside 5'-triphosphate + ADP. The enzyme catalyses a ribonucleoside 5'-diphosphate + ATP = a ribonucleoside 5'-triphosphate + ADP. Major role in the synthesis of nucleoside triphosphates other than ATP. The ATP gamma phosphate is transferred to the NDP beta phosphate via a ping-pong mechanism, using a phosphorylated active-site intermediate. This NDK is microtubule-associated. The chain is Nucleoside diphosphate kinase 1 (NDKR) from Oryza sativa subsp. indica (Rice).